Consider the following 530-residue polypeptide: Cation transporter HKT2;2 (530 aa).

Residues 1–40 lie on the Cytoplasmic side of the membrane; it reads MTSIYQEFIHTKCQSFRSIGRYVLHSIVLIYRFVSLHVHP. Transmembrane regions (helical) follow at residues 41-61 and 102-122; these read FWIQ…LLMF and IVVL…FLGL. Residues 123–186 are Cytoplasmic-facing; sequence MLRLKHKHNP…DLKRSKRLRW (64 aa). The next 2 membrane-spanning stretches (helical) occupy residues 187–207 and 260–280; these read FLGF…FLLV and GLLL…PLFL. Over 281 to 317 the chain is Cytoplasmic; sequence RILIWFLGKVTKLKDLKLMIKNSDELQYDYLLPKLPT. The next 2 helical transmembrane spans lie at 318–338 and 372–392; these read AFLA…FGSV and IDCS…MYLP. At 393–420 the chain is on the cytoplasmic side; it reads PSTTFALSNGDEKTANKKAKRKLGLVVR. Transmembrane regions (helical) follow at residues 421–441 and 494–514; these read NLAF…LITE and SLSG…MLYG. Over 515–530 the chain is Cytoplasmic; it reads RLKAFTKGTGEYWRLW.

It belongs to the TrkH potassium transport family. HKT (TC 2.A.38.3) subfamily.

The protein resides in the membrane. In terms of biological role, seems to be involved in regulation of potassium-sodium homeostasis. Seems to act as a potassium-sodium cotransporter, which mediates increased potassium uptake under external sodium accumulation and contributes to salt-tolerance in cultivar indica Pokkali. The protein is Cation transporter HKT2;2 of Oryza sativa subsp. indica (Rice).